Here is a 184-residue protein sequence, read N- to C-terminus: uncharacterized protein (184 aa).

The disordered stretch occupies residues 130 to 149 (DKDDDKKKKKKDDKKDDPCN).

Its subcellular location is the virion. This is an uncharacterized protein from Acanthamoeba polyphaga (Amoeba).